Reading from the N-terminus, the 89-residue chain is Small ribosomal subunit protein uS15 (89 aa).

This sequence belongs to the universal ribosomal protein uS15 family. In terms of assembly, part of the 30S ribosomal subunit. Forms a bridge to the 50S subunit in the 70S ribosome, contacting the 23S rRNA.

In terms of biological role, one of the primary rRNA binding proteins, it binds directly to 16S rRNA where it helps nucleate assembly of the platform of the 30S subunit by binding and bridging several RNA helices of the 16S rRNA. Forms an intersubunit bridge (bridge B4) with the 23S rRNA of the 50S subunit in the ribosome. The protein is Small ribosomal subunit protein uS15 of Acholeplasma laidlawii (strain PG-8A).